Here is a 172-residue protein sequence, read N- to C-terminus: Hemagglutinin/amebocyte aggregation factor (172 aa).

The N-terminal stretch at 1 to 19 (MNSPAIVIIIFSTLTFSEA) is a signal peptide. 4 tandem repeats follow at residues 21-25 (VNDWD), 50-54 (EDRRW), 73-77 (VNDWD), and 102-106 (EDRRW). 5 disulfides stabilise this stretch: Cys32–Cys58, Cys67–Cys172, Cys84–Cys110, Cys111–Cys117, and Cys123–Cys167. Tandem repeats lie at residues 129 to 133 (VNSWD) and 158 to 162 (EDRRW).

It belongs to the dermatopontin family.

The protein localises to the secreted. Its function is as follows. Possesses the property of inducing both aggregation of amebocytes and agglutination of erythrocytes. The chain is Hemagglutinin/amebocyte aggregation factor from Limulus polyphemus (Atlantic horseshoe crab).